The following is a 208-amino-acid chain: V-type ATP synthase subunit E (208 aa).

It belongs to the V-ATPase E subunit family.

In terms of biological role, produces ATP from ADP in the presence of a proton gradient across the membrane. The chain is V-type ATP synthase subunit E from Chlamydia felis (strain Fe/C-56) (Chlamydophila felis).